Here is a 539-residue protein sequence, read N- to C-terminus: Phosphoenolpyruvate carboxykinase (ATP) (539 aa).

Substrate is bound by residues arginine 61, tyrosine 195, and lysine 201. ATP is bound by residues lysine 201, histidine 220, and 238–246 (GLSGTGKTT). 2 residues coordinate Mn(2+): lysine 201 and histidine 220. Aspartate 259 serves as a coordination point for Mn(2+). Residues glutamate 287, arginine 325, and threonine 450 each contribute to the ATP site. Arginine 325 lines the substrate pocket.

The protein belongs to the phosphoenolpyruvate carboxykinase (ATP) family. Mn(2+) serves as cofactor.

The protein localises to the cytoplasm. It carries out the reaction oxaloacetate + ATP = phosphoenolpyruvate + ADP + CO2. Its pathway is carbohydrate biosynthesis; gluconeogenesis. Involved in the gluconeogenesis. Catalyzes the conversion of oxaloacetate (OAA) to phosphoenolpyruvate (PEP) through direct phosphoryl transfer between the nucleoside triphosphate and OAA. The polypeptide is Phosphoenolpyruvate carboxykinase (ATP) (Methylorubrum populi (strain ATCC BAA-705 / NCIMB 13946 / BJ001) (Methylobacterium populi)).